Here is a 208-residue protein sequence, read N- to C-terminus: Coat protein (208 aa).

Belongs to the potexvirus capsid protein family.

It localises to the virion. Functionally, required for genome encapsidation. Forms ribonucleoprotein complexes along with TGB1 helicase and viral RNA. In Trifolium (WCMV), this protein is Coat protein.